The chain runs to 450 residues: DNA primase DnaG (450 aa).

The region spanning 199–273 is the Toprim domain; that stretch reads DSIIVVEGRA…DVDYVARAPE (75 aa). 3 residues coordinate Mg(2+): glutamate 205, aspartate 247, and aspartate 249. Residues 320–348 are compositionally biased toward basic and acidic residues; that stretch reads APSKEVKPAPKHEPKPQPVEQKPREEKII. Residues 320 to 350 are disordered; the sequence is APSKEVKPAPKHEPKPQPVEQKPREEKIIRP.

It belongs to the archaeal DnaG primase family. As to quaternary structure, forms a ternary complex with MCM helicase and DNA. Component of the archaeal exosome complex. It depends on Mg(2+) as a cofactor.

The enzyme catalyses ssDNA + n NTP = ssDNA/pppN(pN)n-1 hybrid + (n-1) diphosphate.. RNA polymerase that catalyzes the synthesis of short RNA molecules used as primers for DNA polymerase during DNA replication. Also part of the exosome, which is a complex involved in RNA degradation. Acts as a poly(A)-binding protein that enhances the interaction between heteromeric, adenine-rich transcripts and the exosome. In Thermococcus gammatolerans (strain DSM 15229 / JCM 11827 / EJ3), this protein is DNA primase DnaG.